A 132-amino-acid chain; its full sequence is Holo-[acyl-carrier-protein] synthase (132 aa).

2 residues coordinate Mg(2+): aspartate 8 and glutamate 57.

This sequence belongs to the P-Pant transferase superfamily. AcpS family. Mg(2+) is required as a cofactor.

It localises to the cytoplasm. It carries out the reaction apo-[ACP] + CoA = holo-[ACP] + adenosine 3',5'-bisphosphate + H(+). Its function is as follows. Transfers the 4'-phosphopantetheine moiety from coenzyme A to a Ser of acyl-carrier-protein. This Methylobacterium nodulans (strain LMG 21967 / CNCM I-2342 / ORS 2060) protein is Holo-[acyl-carrier-protein] synthase.